A 562-amino-acid chain; its full sequence is Arylsulfatase H (562 aa).

Ca(2+) contacts are provided by aspartate 15, aspartate 16, and cysteine 55. The active-site Nucleophile is the cysteine 55. Cysteine 55 bears the 3-oxoalanine (Cys) mark. Lysine 115 contributes to the substrate binding site. The active site involves histidine 117. The next 2 membrane-spanning stretches (helical) occupy residues 167 to 187 (LWIS…PKFA) and 189 to 209 (WFSV…LFFT). Histidine 271 serves as a coordination point for substrate. Ca(2+)-binding residues include aspartate 323 and asparagine 324. Lysine 348 is a substrate binding site.

The protein belongs to the sulfatase family. The cofactor is Ca(2+). In terms of processing, the conversion to 3-oxoalanine (also known as C-formylglycine, FGly), of a serine or cysteine residue in prokaryotes and of a cysteine residue in eukaryotes, is critical for catalytic activity.

Its subcellular location is the membrane. The chain is Arylsulfatase H (ARSH) from Homo sapiens (Human).